The sequence spans 275 residues: 4-diphosphocytidyl-2-C-methyl-D-erythritol kinase (275 aa).

The active site involves K15. P97–S107 is a binding site for ATP. D137 is an active-site residue.

This sequence belongs to the GHMP kinase family. IspE subfamily.

It carries out the reaction 4-CDP-2-C-methyl-D-erythritol + ATP = 4-CDP-2-C-methyl-D-erythritol 2-phosphate + ADP + H(+). The protein operates within isoprenoid biosynthesis; isopentenyl diphosphate biosynthesis via DXP pathway; isopentenyl diphosphate from 1-deoxy-D-xylulose 5-phosphate: step 3/6. Catalyzes the phosphorylation of the position 2 hydroxy group of 4-diphosphocytidyl-2C-methyl-D-erythritol. This Pseudothermotoga lettingae (strain ATCC BAA-301 / DSM 14385 / NBRC 107922 / TMO) (Thermotoga lettingae) protein is 4-diphosphocytidyl-2-C-methyl-D-erythritol kinase.